The following is a 156-amino-acid chain: Ribosome maturation factor RimP (156 aa).

It belongs to the RimP family.

The protein localises to the cytoplasm. Required for maturation of 30S ribosomal subunits. In Fusobacterium nucleatum subsp. nucleatum (strain ATCC 25586 / DSM 15643 / BCRC 10681 / CIP 101130 / JCM 8532 / KCTC 2640 / LMG 13131 / VPI 4355), this protein is Ribosome maturation factor RimP.